The primary structure comprises 436 residues: Two-pore potassium channel 3 (436 aa).

Over 1–148 the chain is Cytoplasmic; the sequence is MANEGSDPLL…QKDPTETSRS (148 aa). Positions 62–117 are disordered; sequence SHFIDSMKQPSPSSSSTAVNNPFSDSSTLDPLLPPPPPQPEPWLSDQTSSHCQGHA. Residues 71-92 show a composition bias toward low complexity; sequence PSPSSSSTAVNNPFSDSSTLDP. Over residues 93 to 102 the composition is skewed to pro residues; it reads LLPPPPPQPE. Residues 149–169 traverse the membrane as a helical segment; the sequence is VVRQAFALLVVYLSLGVLIYW. The pore-forming intramembrane region spans 185–204; the sequence is DGLYFCIVTMCTIGYGDITP. The helical transmembrane segment at 212–232 threads the bilayer; the sequence is FSIMFVLVGFGFIDILLSGMV. Topologically, residues 233–274 are cytoplasmic; it reads SYVLDLQESYMLDSAKRRDEPEKRRSYIIDVKKGRMRIRLKV. The chain crosses the membrane as a helical span at residues 275–295; the sequence is ALALGVVVLCIAVGVGIMHFI. The segment at residues 302–321 is an intramembrane region (pore-forming); it reads DSFYLSVMSVTTVGYGDRAF. Residues 328-348 form a helical membrane-spanning segment; the sequence is LFAAIWLLVSTLAVARAFLYL. Residues 349–436 are Cytoplasmic-facing; the sequence is AEARVDKRNR…LDLLEGGSGD (88 aa). 2 EF-hand domains span residues 365 to 400 and 404 to 436; these read LCETMSVSQFFAADIDNNGCVSKAEYVIYKLKEMEK and KDILPISKQFDKLDRCSNGKITLLDLLEGGSGD. Positions 378, 380, 382, 384, 389, 417, 421, 423, and 428 each coordinate Ca(2+).

Belongs to the two pore domain potassium channel (TC 1.A.1.7) family. Homodimer. As to expression, expressed in roots, cotyledons, stems, hypocotyls, leaves and flowers. Detected in root tips and in mesophyll cells and guard cells of the leaves.

The protein localises to the vacuole membrane. The protein resides in the plastid. It is found in the chloroplast thylakoid membrane. Inhibited by barium, but not by tetraethylammonium. Two-pore potassium channel modulating the proton motive force (pmf) necessary to convert photochemical energy into physiological functions. Mediates the potassium efflux from the thylakoid lumen required for the regulation of the transmembrane electrical potential, the enhancement of the pH gradient for ATP synthesis, the regulation of electron flow, and pH-mediated photoprotective responses. Requires calcium for channel activity. The chain is Two-pore potassium channel 3 from Arabidopsis thaliana (Mouse-ear cress).